The primary structure comprises 200 residues: MTIRYPNGKRYNQASQPHKTPIKKHTYSNRGMSLEEELNETNEYYLTHNIACVHKKPTPLQIVKVDYPARSAAVVKEAYFKQPSTTDYNGVYKGKYIDFEAKETKNKTSFPLQNFHLHQIEHMKQVIAHNGIAFVIIKFTLFDELYLLDAKHIIAFWNRQNTGGRKSITKEEIVEHGSLLSCGYHPRIDYIRVLDTVYFS.

A disordered region spans residues 1 to 25 (MTIRYPNGKRYNQASQPHKTPIKKH). Mg(2+) contacts are provided by threonine 85, aspartate 87, glutamate 100, and glutamine 119.

Belongs to the RecU family. Mg(2+) serves as cofactor.

Its subcellular location is the cytoplasm. The catalysed reaction is Endonucleolytic cleavage at a junction such as a reciprocal single-stranded crossover between two homologous DNA duplexes (Holliday junction).. Its function is as follows. Endonuclease that resolves Holliday junction intermediates in genetic recombination. Cleaves mobile four-strand junctions by introducing symmetrical nicks in paired strands. Promotes annealing of linear ssDNA with homologous dsDNA. Required for DNA repair, homologous recombination and chromosome segregation. The sequence is that of Holliday junction resolvase RecU from Bacillus thuringiensis (strain Al Hakam).